The sequence spans 154 residues: Ribosome maturation factor RimP (154 aa).

This sequence belongs to the RimP family.

The protein resides in the cytoplasm. Functionally, required for maturation of 30S ribosomal subunits. The protein is Ribosome maturation factor RimP of Ruthia magnifica subsp. Calyptogena magnifica.